A 157-amino-acid chain; its full sequence is Ribosome maturation factor RimP (157 aa).

This sequence belongs to the RimP family.

The protein localises to the cytoplasm. Its function is as follows. Required for maturation of 30S ribosomal subunits. The sequence is that of Ribosome maturation factor RimP from Helicobacter hepaticus (strain ATCC 51449 / 3B1).